A 306-amino-acid chain; its full sequence is Recombination-associated protein RdgC (306 aa).

This sequence belongs to the RdgC family.

Its subcellular location is the cytoplasm. It is found in the nucleoid. May be involved in recombination. The sequence is that of Recombination-associated protein RdgC from Pseudomonas putida (strain GB-1).